The sequence spans 188 residues: MKQPNKAPRANIAAPKGTATPKRRRKTRDELDAEARDRKRQKKHSGNRSGARTNVEGSNKKGHSQTQEKDPRVGSKVPVPLVIESQVKAKSMPKPVENNVVKPRLTPEEELAKLENDERLDALLDRLDNDEVLNKEDQAYVDLTLDRIDALMEQLGIELGDDEDDVEREEKQEDILQLLKRGNPKDTF.

Disordered stretches follow at residues 1-80 (MKQP…VPVP) and 162-188 (DEDD…KDTF). Positions 27–37 (TRDELDAEARD) are enriched in basic and acidic residues. A compositionally biased stretch (polar residues) spans 47 to 57 (NRSGARTNVEG).

The protein belongs to the YihI family. As to quaternary structure, interacts with Der.

Its function is as follows. A GTPase-activating protein (GAP) that modifies Der/EngA GTPase function. May play a role in ribosome biogenesis. This is Der GTPase-activating protein YihI from Yersinia pseudotuberculosis serotype O:3 (strain YPIII).